Consider the following 466-residue polypeptide: 3-isopropylmalate dehydratase large subunit (466 aa).

[4Fe-4S] cluster-binding residues include Cys-346, Cys-406, and Cys-409.

It belongs to the aconitase/IPM isomerase family. LeuC type 1 subfamily. Heterodimer of LeuC and LeuD. The cofactor is [4Fe-4S] cluster.

The enzyme catalyses (2R,3S)-3-isopropylmalate = (2S)-2-isopropylmalate. Its pathway is amino-acid biosynthesis; L-leucine biosynthesis; L-leucine from 3-methyl-2-oxobutanoate: step 2/4. Catalyzes the isomerization between 2-isopropylmalate and 3-isopropylmalate, via the formation of 2-isopropylmaleate. The polypeptide is 3-isopropylmalate dehydratase large subunit (Cytophaga hutchinsonii (strain ATCC 33406 / DSM 1761 / CIP 103989 / NBRC 15051 / NCIMB 9469 / D465)).